A 427-amino-acid polypeptide reads, in one-letter code: Peptidase B (427 aa).

Mn(2+) is bound by residues Lys195 and Asp200. Lys207 is an active-site residue. Asp218, Asp277, and Glu279 together coordinate Mn(2+). The active site involves Arg281.

Belongs to the peptidase M17 family. In terms of assembly, homohexamer. The cofactor is Mn(2+).

It is found in the cytoplasm. It carries out the reaction Release of an N-terminal amino acid, Xaa, from a peptide or arylamide. Xaa is preferably Glu or Asp but may be other amino acids, including Leu, Met, His, Cys and Gln.. In terms of biological role, probably plays an important role in intracellular peptide degradation. This Escherichia coli (strain ATCC 8739 / DSM 1576 / NBRC 3972 / NCIMB 8545 / WDCM 00012 / Crooks) protein is Peptidase B.